We begin with the raw amino-acid sequence, 1791 residues long: Protein TIC 214 (1791 aa).

6 helical membrane passes run 19 to 39 (IINS…FSIG), 68 to 88 (FIAG…HLAL), 91 to 111 (PHTI…WNNH), 133 to 153 (VFLN…SSML), 176 to 196 (VGWL…LVWI), and 227 to 247 (IFSI…PSPI). Residues 1492–1511 (ASQVELESDKENKKNPESAL) form a disordered region. Residues 1498–1511 (ESDKENKKNPESAL) show a composition bias toward basic and acidic residues.

Belongs to the TIC214 family. In terms of assembly, part of the Tic complex.

It is found in the plastid. The protein resides in the chloroplast inner membrane. Involved in protein precursor import into chloroplasts. May be part of an intermediate translocation complex acting as a protein-conducting channel at the inner envelope. The chain is Protein TIC 214 from Barbarea verna (Land cress).